Consider the following 405-residue polypeptide: Argininosuccinate synthase (405 aa).

ATP is bound by residues 10–18 and A37; that span reads AYSGGLDTS. Residues Y88 and S93 each contribute to the L-citrulline site. G118 serves as a coordination point for ATP. Residues T120, N124, and D125 each coordinate L-aspartate. L-citrulline is bound at residue N124. L-citrulline is bound by residues R128, S177, S186, E263, and Y275.

Belongs to the argininosuccinate synthase family. Type 1 subfamily. As to quaternary structure, homotetramer.

The protein resides in the cytoplasm. It carries out the reaction L-citrulline + L-aspartate + ATP = 2-(N(omega)-L-arginino)succinate + AMP + diphosphate + H(+). Its pathway is amino-acid biosynthesis; L-arginine biosynthesis; L-arginine from L-ornithine and carbamoyl phosphate: step 2/3. This chain is Argininosuccinate synthase, found in Acetivibrio thermocellus (strain ATCC 27405 / DSM 1237 / JCM 9322 / NBRC 103400 / NCIMB 10682 / NRRL B-4536 / VPI 7372) (Clostridium thermocellum).